The primary structure comprises 55 residues: Protein CADMIUM TOLERANCE 1 (55 aa).

Residues 24-40 (GCLYACIFTALCCFCCY) form a helical membrane-spanning segment.

Belongs to the CYSTM1 family.

It localises to the cell membrane. Its subcellular location is the secreted. The protein resides in the cell wall. In terms of biological role, confers resistance to heavy metal ions (e.g. cadmium (CdCl(2)) and copper (CuCl(2))) by chelating them at the plasma membrane of root cells, thus stopping their entry and reducing their accumulation. The sequence is that of Protein CADMIUM TOLERANCE 1 from Digitaria ciliaris (Southern crabgrass).